The following is a 218-amino-acid chain: Thiopurine S-methyltransferase (218 aa).

S-adenosyl-L-methionine contacts are provided by Trp10, Leu45, Glu66, and Arg123.

The protein belongs to the class I-like SAM-binding methyltransferase superfamily. TPMT family.

The protein localises to the cytoplasm. It catalyses the reaction S-adenosyl-L-methionine + a thiopurine = S-adenosyl-L-homocysteine + a thiopurine S-methylether.. This is Thiopurine S-methyltransferase from Shewanella sp. (strain MR-4).